Reading from the N-terminus, the 537-residue chain is ESX-2 secretion system protein EccE2 (537 aa).

A helical membrane pass occupies residues 31–51 (ALGGQLGAVMAVVVGVALVFV).

This sequence belongs to the EccE family. In terms of assembly, could be part of the ESX-2 / type VII secretion system (T7SS), which is composed of cytosolic and membrane components.

The protein resides in the cell membrane. The polypeptide is ESX-2 secretion system protein EccE2 (eccE2) (Mycobacterium tuberculosis (strain CDC 1551 / Oshkosh)).